The chain runs to 586 residues: Aspartate--tRNA(Asp/Asn) ligase (586 aa).

Glu176 serves as a coordination point for L-aspartate. Residues 200–203 (QIFK) form an aspartate region. Arg222 contacts L-aspartate. ATP contacts are provided by residues 222-224 (RDE) and Gln231. His449 contacts L-aspartate. Glu483 is a binding site for ATP. Residue Arg490 participates in L-aspartate binding. Position 535–538 (535–538 (GIDR)) interacts with ATP.

The protein belongs to the class-II aminoacyl-tRNA synthetase family. Type 1 subfamily. As to quaternary structure, homodimer.

Its subcellular location is the cytoplasm. It carries out the reaction tRNA(Asx) + L-aspartate + ATP = L-aspartyl-tRNA(Asx) + AMP + diphosphate. Its function is as follows. Aspartyl-tRNA synthetase with relaxed tRNA specificity since it is able to aspartylate not only its cognate tRNA(Asp) but also tRNA(Asn). Reaction proceeds in two steps: L-aspartate is first activated by ATP to form Asp-AMP and then transferred to the acceptor end of tRNA(Asp/Asn). This Brachyspira hyodysenteriae (strain ATCC 49526 / WA1) protein is Aspartate--tRNA(Asp/Asn) ligase.